Here is a 1019-residue protein sequence, read N- to C-terminus: Enteropeptidase (1019 aa).

The N-myristoyl glycine moiety is linked to residue G2. Topologically, residues 2 to 18 (GSKRGISSRHHSLSSYE) are cytoplasmic. Residues 19–47 (IMFAALFAILVVLCAGLIAVSCLTIKESQ) traverse the membrane as a helical; Signal-anchor for type II membrane protein segment. The Extracellular segment spans residues 48-1019 (RGAALGQSHE…FTEWIQSFLH (972 aa)). Positions 54–169 (QSHEARATFK…NSVDILDKLT (116 aa)) constitute an SEA domain. N-linked (GlcNAc...) asparagine glycans are attached at residues N116, N147, and N179. The region spanning 182 to 223 (IECLPGSSPCTDALTCIKADLFCDGEVNCPDGSDEDNKMCAT) is the LDL-receptor class A 1 domain. Disulfide bonds link C184/C197, C191/C210, C204/C221, and C225/C253. Positions 225–334 (CDGRFLLTGS…VGFNATYTAF (110 aa)) constitute a CUB 1 domain. N-linked (GlcNAc...) asparagine glycosylation is found at N328, N335, N388, N440, N470, N503, N534, and N630. The MAM domain occupies 342-504 (YEKINCNFED…ISLTYGICNG (163 aa)). C524 and C552 form a disulfide bridge. In terms of domain architecture, CUB 2 spans 524 to 634 (CGGPFELWEP…GGFKANFTTG (111 aa)). Residues 641-679 (EPCKADHFQCKNGECVPLVNLCDGHLHCEDGSDEADCVR) enclose the LDL-receptor class A 2 domain. Intrachain disulfides connect C643–C655, C650–C668, and C662–C677. The 94-residue stretch at 678–771 (VRFFNGTTNN…LIRLQCNHKS (94 aa)) folds into the SRCR domain. N-linked (GlcNAc...) asparagine glycosylation is found at N682, N706, and N725. Intrachain disulfides connect C757–C767, C772–C896, and C810–C826. One can recognise a Peptidase S1 domain in the interval 785–1019 (IVGGSNAKEG…FTEWIQSFLH (235 aa)). Catalysis depends on H825, which acts as the Charge relay system. N848 carries N-linked (GlcNAc...) asparagine glycosylation. The Charge relay system role is filled by D876. N887, N909, and N949 each carry an N-linked (GlcNAc...) asparagine glycan. 3 disulfides stabilise this stretch: C910–C977, C941–C956, and C967–C995. The active-site Charge relay system is the S971.

Belongs to the peptidase S1 family. In terms of assembly, heterodimer of a catalytic (light) chain and a multidomain (heavy) chain linked by a disulfide bond. In terms of processing, the chains are derived from a single precursor that is cleaved by a trypsin-like protease. As to expression, intestinal brush border.

It localises to the membrane. The enzyme catalyses Activation of trypsinogen by selective cleavage of 6-Lys-|-Ile-7 bond.. Functionally, responsible for initiating activation of pancreatic proteolytic proenzymes (trypsin, chymotrypsin and carboxypeptidase A). It catalyzes the conversion of trypsinogen to trypsin which in turn activates other proenzymes including chymotrypsinogen, procarboxypeptidases, and proelastases. The sequence is that of Enteropeptidase (TMPRSS15) from Homo sapiens (Human).